Consider the following 296-residue polypeptide: 4-hydroxybenzoate octaprenyltransferase (296 aa).

The next 8 helical transmembrane spans lie at 28 to 48, 52 to 72, 102 to 122, 146 to 166, 169 to 189, 219 to 239, 241 to 261, and 275 to 295; these read PIGIYLLLWPTLWALWIAGKG, LINIVIFVLGVVLTRAGGCVI, ALVFFAVLMGISFLLVLLTNA, YYPQVVLGAAFSWGMPMAFTA, GDLPATAWLLYIANLLWTVGY, VIILTLQGLSLVCLLLAGARF, LGGWFHLGLLAAAGCFAWEFW, and FLHNHWAGLAIFVGIVADYAF.

The protein belongs to the UbiA prenyltransferase family. Mg(2+) is required as a cofactor.

Its subcellular location is the cell inner membrane. The catalysed reaction is all-trans-octaprenyl diphosphate + 4-hydroxybenzoate = 4-hydroxy-3-(all-trans-octaprenyl)benzoate + diphosphate. Its pathway is cofactor biosynthesis; ubiquinone biosynthesis. In terms of biological role, catalyzes the prenylation of para-hydroxybenzoate (PHB) with an all-trans polyprenyl group. Mediates the second step in the final reaction sequence of ubiquinone-8 (UQ-8) biosynthesis, which is the condensation of the polyisoprenoid side chain with PHB, generating the first membrane-bound Q intermediate 3-octaprenyl-4-hydroxybenzoate. This is 4-hydroxybenzoate octaprenyltransferase from Pseudomonas fluorescens (strain SBW25).